The chain runs to 44 residues: uncharacterized protein (44 aa).

The helical transmembrane segment at 6 to 26 threads the bilayer; the sequence is SILIRGGGGVLIVLILLLWIV.

The protein resides in the membrane. This is an uncharacterized protein from Ornithodoros (relapsing fever ticks).